Here is a 943-residue protein sequence, read N- to C-terminus: Isoleucine--tRNA ligase (943 aa).

The 'HIGH' region motif lies at Pro-58–His-68. An L-isoleucyl-5'-AMP-binding site is contributed by Glu-567. Positions Lys-608–Ser-612 match the 'KMSKS' region motif. Lys-611 lines the ATP pocket. The Zn(2+) site is built by Cys-906, Cys-909, Cys-926, and Cys-929.

It belongs to the class-I aminoacyl-tRNA synthetase family. IleS type 1 subfamily. Monomer. Zn(2+) serves as cofactor.

The protein resides in the cytoplasm. The catalysed reaction is tRNA(Ile) + L-isoleucine + ATP = L-isoleucyl-tRNA(Ile) + AMP + diphosphate. Its function is as follows. Catalyzes the attachment of isoleucine to tRNA(Ile). As IleRS can inadvertently accommodate and process structurally similar amino acids such as valine, to avoid such errors it has two additional distinct tRNA(Ile)-dependent editing activities. One activity is designated as 'pretransfer' editing and involves the hydrolysis of activated Val-AMP. The other activity is designated 'posttransfer' editing and involves deacylation of mischarged Val-tRNA(Ile). The chain is Isoleucine--tRNA ligase from Pseudomonas putida (strain W619).